The chain runs to 338 residues: 1-aminocyclopropane-1-carboxylate deaminase (338 aa).

K51 is modified (N6-(pyridoxal phosphate)lysine). Catalysis depends on S78, which acts as the Nucleophile.

This sequence belongs to the ACC deaminase/D-cysteine desulfhydrase family. As to quaternary structure, homotrimer. Pyridoxal 5'-phosphate serves as cofactor.

The enzyme catalyses 1-aminocyclopropane-1-carboxylate + H2O = 2-oxobutanoate + NH4(+). Functionally, catalyzes a cyclopropane ring-opening reaction, the irreversible conversion of 1-aminocyclopropane-1-carboxylate (ACC) to ammonia and alpha-ketobutyrate. Allows growth on ACC as a nitrogen source. In Burkholderia pseudomallei (strain 1106a), this protein is 1-aminocyclopropane-1-carboxylate deaminase.